Here is an 818-residue protein sequence, read N- to C-terminus: Phosphoenolpyruvate synthase (818 aa).

H442 serves as the catalytic Tele-phosphohistidine intermediate. 7 residues coordinate substrate: R532, R601, E703, G724, S725, N726, and D727. A Mg(2+)-binding site is contributed by E703. D727 is a Mg(2+) binding site. C774 (proton donor) is an active-site residue.

The protein belongs to the PEP-utilizing enzyme family. Requires Mg(2+) as cofactor.

It catalyses the reaction pyruvate + ATP + H2O = phosphoenolpyruvate + AMP + phosphate + 2 H(+). The protein operates within carbohydrate biosynthesis; gluconeogenesis. Its function is as follows. Catalyzes the phosphorylation of pyruvate to phosphoenolpyruvate. The polypeptide is Phosphoenolpyruvate synthase (ppsA) (Synechocystis sp. (strain ATCC 27184 / PCC 6803 / Kazusa)).